The chain runs to 578 residues: Ketol-acid reductoisomerase, chloroplastic (578 aa).

Residues 1–52 constitute a chloroplast transit peptide; the sequence is MAASTTLALSHPKTLAAAAAAAPKAPTAPAAVSFPVSHAACAPLAARRRAVT. The region spanning 90 to 288 is the KARI N-terminal Rossmann domain; the sequence is VRGGRNLFPL…ALGSPFTFAT (199 aa). NADP(+) contacts are provided by residues 111-118, 144-149, and 183-187; these read GVIGWGSQ, RKGSKS, and SDAAQ. His-208 is a catalytic residue. 2 KARI C-terminal knotted domains span residues 289–437 and 438–574; these read TLEQ…RPEN and DLGP…RPEL. Mg(2+) contacts are provided by Asp-297, Glu-301, Glu-474, and Glu-478. A substrate-binding site is contributed by Ser-500.

Belongs to the ketol-acid reductoisomerase family. Homodimer. The cofactor is Mg(2+).

It is found in the plastid. Its subcellular location is the chloroplast. It carries out the reaction (2R)-2,3-dihydroxy-3-methylbutanoate + NADP(+) = (2S)-2-acetolactate + NADPH + H(+). It catalyses the reaction (2R,3R)-2,3-dihydroxy-3-methylpentanoate + NADP(+) = (S)-2-ethyl-2-hydroxy-3-oxobutanoate + NADPH + H(+). It participates in amino-acid biosynthesis; L-isoleucine biosynthesis; L-isoleucine from 2-oxobutanoate: step 2/4. The protein operates within amino-acid biosynthesis; L-valine biosynthesis; L-valine from pyruvate: step 2/4. The chain is Ketol-acid reductoisomerase, chloroplastic from Oryza sativa subsp. japonica (Rice).